The following is a 455-amino-acid chain: tRNA modification GTPase MnmE (455 aa).

A (6S)-5-formyl-5,6,7,8-tetrahydrofolate-binding site is contributed by Arg22. A disordered region spans residues 43-67; it reads RRATRAALRSPPSGPGPTGPGPEEG. (6S)-5-formyl-5,6,7,8-tetrahydrofolate is bound by residues Glu92 and Arg132. One can recognise a TrmE-type G domain in the interval 228-381; it reads GLQVAVVGAP…LEAALESRAR (154 aa). K(+) is bound at residue Asn238. GTP contacts are provided by residues 238–243, 257–263, and 282–285; these read NVGKSS, SDIAGTT, and DTAG. Ser242 contributes to the Mg(2+) binding site. The K(+) site is built by Ser257, Ile259, and Thr262. Residue Thr263 coordinates Mg(2+). Lys455 is a binding site for (6S)-5-formyl-5,6,7,8-tetrahydrofolate.

Belongs to the TRAFAC class TrmE-Era-EngA-EngB-Septin-like GTPase superfamily. TrmE GTPase family. Homodimer. Heterotetramer of two MnmE and two MnmG subunits. K(+) is required as a cofactor.

It is found in the cytoplasm. Exhibits a very high intrinsic GTPase hydrolysis rate. Involved in the addition of a carboxymethylaminomethyl (cmnm) group at the wobble position (U34) of certain tRNAs, forming tRNA-cmnm(5)s(2)U34. This is tRNA modification GTPase MnmE from Rhodospirillum rubrum (strain ATCC 11170 / ATH 1.1.1 / DSM 467 / LMG 4362 / NCIMB 8255 / S1).